A 150-amino-acid polypeptide reads, in one-letter code: FAD synthase (150 aa).

ATP contacts are provided by residues 20 to 21, 25 to 28, and aspartate 103; these read TF and HPGH.

The protein belongs to the archaeal FAD synthase family. As to quaternary structure, homodimer. Requires a divalent metal cation as cofactor.

The enzyme catalyses FMN + ATP + H(+) = FAD + diphosphate. It participates in cofactor biosynthesis; FAD biosynthesis; FAD from FMN: step 1/1. In terms of biological role, catalyzes the transfer of the AMP portion of ATP to flavin mononucleotide (FMN) to produce flavin adenine dinucleotide (FAD) coenzyme. This Methanohalobium evestigatum (strain ATCC BAA-1072 / DSM 3721 / NBRC 107634 / OCM 161 / Z-7303) protein is FAD synthase.